A 352-amino-acid chain; its full sequence is Ni-sirohydrochlorin a,c-diamide reductive cyclase complex, component CfbD (352 aa).

This sequence belongs to the NifD/NifK/NifE/NifN family. Homodimer or monomer. The Ni-sirohydrochlorin a,c-diamide reductive cyclase complex is composed of a NifH homolog component CfbC and a NifD homolog component CfbD. Requires [4Fe-4S] cluster as cofactor.

It carries out the reaction Ni-sirohydrochlorin a,c-diamide + 3 AH2 + ATP + H2O = 15,17(3)-seco-F430-17(3)-acid + 3 A + ADP + phosphate. Functionally, involved in the biosynthesis of the unique nickel-containing tetrapyrrole coenzyme F430, the prosthetic group of methyl-coenzyme M reductase (MCR), which plays a key role in methanogenesis and anaerobic methane oxidation. Catalyzes both the six-electron reduction of the tetrahydroporphyrin ring system and the gamma-lactamization of the c-acetamide side chain of Ni-sirohydrochlorin a,c-diamide to yield 15,17(3)-seco-F430-17(3)-acid (seco-F430), the last intermediate in the biosynthesis of the coenzyme F430. The chain is Ni-sirohydrochlorin a,c-diamide reductive cyclase complex, component CfbD from Methanocaldococcus jannaschii (strain ATCC 43067 / DSM 2661 / JAL-1 / JCM 10045 / NBRC 100440) (Methanococcus jannaschii).